The chain runs to 510 residues: Sphingolipid C9-methyltransferase B (510 aa).

Residue Asn-55 is glycosylated (N-linked (GlcNAc...) asparagine). The next 2 membrane-spanning stretches (helical) occupy residues 62–82 (LLGGTLVGLPAFLTWFFGGGA) and 84–104 (TFVFFFLLSVLPVLVAFWTYA). The N-linked (GlcNAc...) asparagine glycan is linked to Asn-175. S-adenosyl-L-methionine is bound by residues 227-228 (YT), 264-272 (MLDIGCGWG), 290-295 (TIAENQ), and 320-321 (YR). Residue Asn-294 is glycosylated (N-linked (GlcNAc...) asparagine).

The protein belongs to the CFA/CMAS family.

Its subcellular location is the membrane. It carries out the reaction a (4E,8E)-4-sphinga-4,8-dienine ceramide + S-adenosyl-L-methionine = a 9-methyl-(4E,8E)-sphinga-4,8-dienine ceramide + S-adenosyl-L-homocysteine + H(+). Its pathway is lipid metabolism; sphingolipid metabolism. In terms of biological role, catalyzes methylation of the sphingoid base component of glucosylceramides (GluCers) at the C9-position. Sphingolipid C9-methylation requires 4,8-desaturated ceramides as substrates. Glucosylceramides play important roles in growth, differentiation and pathogenicity. The methyl group at the C9-position distinguishes fungal glucosylceramides from those of plants and animals and may thus play a role in host-pathogen interactions enabling the host to recognize the fungal attack and initiate specific defense responses. The polypeptide is Sphingolipid C9-methyltransferase B (Emericella nidulans (strain FGSC A4 / ATCC 38163 / CBS 112.46 / NRRL 194 / M139) (Aspergillus nidulans)).